Reading from the N-terminus, the 257-residue chain is Large ribosomal subunit protein uL2 (257 aa).

Glycyl lysine isopeptide (Lys-Gly) (interchain with G-Cter in SUMO2) cross-links involve residues lysine 42 and lysine 149. Positions 207–232 (VEHPFGGGNHQHIGKPSTIRRDAPAG) are disordered. Histidine 216 is subject to (3S)-3-hydroxyhistidine. Residues lysine 234 and lysine 250 each participate in a glycyl lysine isopeptide (Lys-Gly) (interchain with G-Cter in SUMO2) cross-link.

This sequence belongs to the universal ribosomal protein uL2 family. In terms of assembly, component of the large ribosomal subunit. Interacts with CRY1. In terms of processing, hydroxylated on His-216 by RIOX1. The modification is impaired by hypoxia.

Its subcellular location is the cytoplasm. Its function is as follows. Component of the large ribosomal subunit. The ribosome is a large ribonucleoprotein complex responsible for the synthesis of proteins in the cell. This Bos taurus (Bovine) protein is Large ribosomal subunit protein uL2 (RPL8).